A 128-amino-acid chain; its full sequence is MLHSSHRPYPRGARVAHLLREEIAAVLPRLHGMSSGLSPLPPSITMVDLPTDMRSATVYFSLMDGPDRADTIREVLQDHAGEIRQLLGRRLALRRIPPLHFVYDARFDRGAEMAELLAHLPPAPEDLP.

Belongs to the RbfA family. Monomer. Binds 30S ribosomal subunits, but not 50S ribosomal subunits or 70S ribosomes.

Its subcellular location is the cytoplasm. Its function is as follows. One of several proteins that assist in the late maturation steps of the functional core of the 30S ribosomal subunit. Associates with free 30S ribosomal subunits (but not with 30S subunits that are part of 70S ribosomes or polysomes). Required for efficient processing of 16S rRNA. May interact with the 5'-terminal helix region of 16S rRNA. This chain is Ribosome-binding factor A, found in Acidithiobacillus ferrooxidans (strain ATCC 23270 / DSM 14882 / CIP 104768 / NCIMB 8455) (Ferrobacillus ferrooxidans (strain ATCC 23270)).